A 315-amino-acid polypeptide reads, in one-letter code: Tyrosine recombinase XerC (315 aa).

In terms of domain architecture, Core-binding (CB) spans 1 to 103; sequence MIASFYAFLD…AIKSFAKFCV (103 aa). The 183-residue stretch at 124 to 306 folds into the Tyr recombinase domain; sequence ELPSPLTYEQ…SMKLKKQIHD (183 aa). Active-site residues include R164, K188, H258, R261, and H284. The active-site O-(3'-phospho-DNA)-tyrosine intermediate is Y293.

It belongs to the 'phage' integrase family. XerC subfamily. As to quaternary structure, forms a cyclic heterotetrameric complex composed of two molecules of XerC and two molecules of XerD.

Its subcellular location is the cytoplasm. Its function is as follows. Site-specific tyrosine recombinase, which acts by catalyzing the cutting and rejoining of the recombining DNA molecules. The XerC-XerD complex is essential to convert dimers of the bacterial chromosome into monomers to permit their segregation at cell division. It also contributes to the segregational stability of plasmids. The polypeptide is Tyrosine recombinase XerC (Chlamydia muridarum (strain MoPn / Nigg)).